Consider the following 367-residue polypeptide: Probable butyrate kinase (367 aa).

Belongs to the acetokinase family.

It localises to the cytoplasm. The enzyme catalyses butanoate + ATP = butanoyl phosphate + ADP. The polypeptide is Probable butyrate kinase (Bacillus cereus (strain ZK / E33L)).